Reading from the N-terminus, the 443-residue chain is Probable D-serine dehydratase (443 aa).

Lysine 118 bears the N6-(pyridoxal phosphate)lysine mark.

The protein belongs to the serine/threonine dehydratase family. DsdA subfamily. Pyridoxal 5'-phosphate is required as a cofactor.

It carries out the reaction D-serine = pyruvate + NH4(+). This chain is Probable D-serine dehydratase, found in Aeromonas hydrophila subsp. hydrophila (strain ATCC 7966 / DSM 30187 / BCRC 13018 / CCUG 14551 / JCM 1027 / KCTC 2358 / NCIMB 9240 / NCTC 8049).